Here is a 111-residue protein sequence, read N- to C-terminus: T cell receptor beta variable 20-1 (111 aa).

A signal peptide spans 1–15; it reads MLLLLLLLGPGSGLG. One can recognise an Ig-like domain in the interval 16–111; sequence AVVSQHPSRV…DSSFYICSAR (96 aa). The cysteines at positions 37 and 108 are disulfide-linked.

In terms of assembly, alpha-beta TR is a heterodimer composed of an alpha and beta chain; disulfide-linked. The alpha-beta TR is associated with the transmembrane signaling CD3 coreceptor proteins to form the TR-CD3 (TcR or TCR). The assembly of alpha-beta TR heterodimers with CD3 occurs in the endoplasmic reticulum where a single alpha-beta TR heterodimer associates with one CD3D-CD3E heterodimer, one CD3G-CD3E heterodimer and one CD247 homodimer forming a stable octameric structure. CD3D-CD3E and CD3G-CD3E heterodimers preferentially associate with TR alpha and TR beta chains, respectively. The association of the CD247 homodimer is the last step of TcR assembly in the endoplasmic reticulum and is required for transport to the cell surface.

It localises to the cell membrane. In terms of biological role, v region of the variable domain of T cell receptor (TR) beta chain that participates in the antigen recognition. Alpha-beta T cell receptors are antigen specific receptors which are essential to the immune response and are present on the cell surface of T lymphocytes. Recognize peptide-major histocompatibility (MH) (pMH) complexes that are displayed by antigen presenting cells (APC), a prerequisite for efficient T cell adaptive immunity against pathogens. Binding of alpha-beta TR to pMH complex initiates TR-CD3 clustering on the cell surface and intracellular activation of LCK that phosphorylates the ITAM motifs of CD3G, CD3D, CD3E and CD247 enabling the recruitment of ZAP70. In turn ZAP70 phosphorylates LAT, which recruits numerous signaling molecules to form the LAT signalosome. The LAT signalosome propagates signal branching to three major signaling pathways, the calcium, the mitogen-activated protein kinase (MAPK) kinase and the nuclear factor NF-kappa-B (NF-kB) pathways, leading to the mobilization of transcription factors that are critical for gene expression and essential for T cell growth and differentiation. The T cell repertoire is generated in the thymus, by V-(D)-J rearrangement. This repertoire is then shaped by intrathymic selection events to generate a peripheral T cell pool of self-MH restricted, non-autoaggressive T cells. Post-thymic interaction of alpha-beta TR with the pMH complexes shapes TR structural and functional avidity. This chain is T cell receptor beta variable 20-1, found in Homo sapiens (Human).